Reading from the N-terminus, the 588-residue chain is 2-isopropylmalate synthase (588 aa).

A Pyruvate carboxyltransferase domain is found at 40–314 (PRWCAVDLRD…DPQIDFSDLD (275 aa)). Asp49, His253, His255, and Asn289 together coordinate Mg(2+). Positions 456–588 (APLDRVEEKW…TVREPELAAV (133 aa)) are regulatory domain.

Belongs to the alpha-IPM synthase/homocitrate synthase family. LeuA type 2 subfamily. In terms of assembly, homodimer. It depends on Mg(2+) as a cofactor.

The protein resides in the cytoplasm. The enzyme catalyses 3-methyl-2-oxobutanoate + acetyl-CoA + H2O = (2S)-2-isopropylmalate + CoA + H(+). It functions in the pathway amino-acid biosynthesis; L-leucine biosynthesis; L-leucine from 3-methyl-2-oxobutanoate: step 1/4. Its function is as follows. Catalyzes the condensation of the acetyl group of acetyl-CoA with 3-methyl-2-oxobutanoate (2-ketoisovalerate) to form 3-carboxy-3-hydroxy-4-methylpentanoate (2-isopropylmalate). The chain is 2-isopropylmalate synthase from Clavibacter michiganensis subsp. michiganensis (strain NCPPB 382).